The chain runs to 523 residues: MAELTIRPEEIRDALDNFVQSYQPDAASREEVGTVSVAGDGIAKVEGLPSAMANELLKFEDGTLGLALNLEEREIGAIVLGEFSGIEEGQPVQRTGEVLSVGVGEGYLGRVVDPLGNPIDGLGEIATESRRALELQAPGVMVRKSVHEPMQTGYKAVDAMVPIGRGQRQLIIGDRQTGKTALAVDTIINQRDNWRSGDVNKQVRCIYVAIGQKGSTIASVRGALEEAGALEYTTIVAAPASDPAGFKYLAPYTGSAIGQHWMYDGKHVLIIFDDLSKQADAYRAVSLLLRRPPGREAYPGDVFYLHSRLLERCAKLSDEMGAGSMTGLPIVETKANDVSAFIPTNVISITDGQCFLESDLFNAGQRPALNVGISVSRVGGSAQHKAMKQVSGRLRVDLAQFRELEAFAAFGSDLDAASKASLERGKRMVELLKQPQYAPFPMEEQVVSVWAGTTGKMDDVPVEDIRRFEAELLEFLRRERKDLLTSIAEGGKMSDDTLQSVADAIAAFKQQFETSDGKLLGEG.

ATP is bound at residue 173–180 (GDRQTGKT).

It belongs to the ATPase alpha/beta chains family. In terms of assembly, F-type ATPases have 2 components, CF(1) - the catalytic core - and CF(0) - the membrane proton channel. CF(1) has five subunits: alpha(3), beta(3), gamma(1), delta(1), epsilon(1). CF(0) has three main subunits: a(1), b(2) and c(9-12). The alpha and beta chains form an alternating ring which encloses part of the gamma chain. CF(1) is attached to CF(0) by a central stalk formed by the gamma and epsilon chains, while a peripheral stalk is formed by the delta and b chains.

The protein localises to the cell membrane. The enzyme catalyses ATP + H2O + 4 H(+)(in) = ADP + phosphate + 5 H(+)(out). In terms of biological role, produces ATP from ADP in the presence of a proton gradient across the membrane. The alpha chain is a regulatory subunit. The sequence is that of ATP synthase subunit alpha from Streptomyces griseus subsp. griseus (strain JCM 4626 / CBS 651.72 / NBRC 13350 / KCC S-0626 / ISP 5235).